The sequence spans 310 residues: GTP-binding protein GTR1 (310 aa).

S15, G18, K19, S20, S21, T35, T41, G64, H126, D129, and I166 together coordinate GTP.

Belongs to the GTR/RAG GTP-binding protein family. Heterodimer; with GTR2. Component of the GSE complex composed of GTR1, GTR2, SLM4, MEH1 and LTV1. Interacts with GTR2; the interaction is direct. Interacts with TOR1.

Its subcellular location is the vacuole membrane. The enzyme catalyses GTP + H2O = GDP + phosphate + H(+). Functionally, GTPase involved in activation of the TORC1 signaling pathway, which promotes growth and represses autophagy in nutrient-rich conditions. Also required for TORC1 inactivation during nitrogen starvation. Required for intracellular sorting of GAP1 out of the endosome. Functionally associated with the inorganic phosphate transporter PHO84, and may be involved in regulating its function or localization. The polypeptide is GTP-binding protein GTR1 (GTR1) (Saccharomyces cerevisiae (strain ATCC 204508 / S288c) (Baker's yeast)).